The following is a 124-amino-acid chain: Galanin peptides (124 aa).

Positions 1–19 (MARGSVILLAWLLLVATLS) are cleaved as a signal peptide. Positions 20-30 (ATLGLGMPTKE) are excised as a propeptide. The residue at position 61 (Thr61) is a Threonine amide. 2 positions are modified to phosphoserine: Ser117 and Ser118.

Belongs to the galanin family.

The protein localises to the secreted. In terms of biological role, endocrine hormone of the central and peripheral nervous systems that binds and activates the G protein-coupled receptors GALR1, GALR2, and GALR3. This small neuropeptide may regulate diverse physiologic functions including contraction of smooth muscle of the gastrointestinal and genitourinary tract, growth hormone and insulin release and adrenal secretion. The sequence is that of Galanin peptides (Gal) from Rattus norvegicus (Rat).